A 269-amino-acid polypeptide reads, in one-letter code: Hydroxyethylthiazole kinase (269 aa).

Met-45 serves as a coordination point for substrate. ATP contacts are provided by Arg-121 and Thr-167. Gly-194 is a binding site for substrate.

Belongs to the Thz kinase family. Requires Mg(2+) as cofactor.

The enzyme catalyses 5-(2-hydroxyethyl)-4-methylthiazole + ATP = 4-methyl-5-(2-phosphooxyethyl)-thiazole + ADP + H(+). Its pathway is cofactor biosynthesis; thiamine diphosphate biosynthesis; 4-methyl-5-(2-phosphoethyl)-thiazole from 5-(2-hydroxyethyl)-4-methylthiazole: step 1/1. Its function is as follows. Catalyzes the phosphorylation of the hydroxyl group of 4-methyl-5-beta-hydroxyethylthiazole (THZ). The sequence is that of Hydroxyethylthiazole kinase from Brevibacillus brevis (strain 47 / JCM 6285 / NBRC 100599).